Here is a 140-residue protein sequence, read N- to C-terminus: D-ribose pyranase (140 aa).

Histidine 20 (proton donor) is an active-site residue. Substrate-binding positions include aspartate 28, histidine 99, and 121–123 (YSS).

It belongs to the RbsD / FucU family. RbsD subfamily. Homodecamer.

It is found in the cytoplasm. It carries out the reaction beta-D-ribopyranose = beta-D-ribofuranose. The protein operates within carbohydrate metabolism; D-ribose degradation; D-ribose 5-phosphate from beta-D-ribopyranose: step 1/2. In terms of biological role, catalyzes the interconversion of beta-pyran and beta-furan forms of D-ribose. The sequence is that of D-ribose pyranase from Pseudothermotoga lettingae (strain ATCC BAA-301 / DSM 14385 / NBRC 107922 / TMO) (Thermotoga lettingae).